The chain runs to 308 residues: MLPPYFLFKEMTDTQYIGRFAPSPSGELHFGSLIAALGSYLQARARQGRWLVRIEDIDPPREVPGAAETILRQLEHYGLHWDGDVLWQSQRHDAYREALAWLHEQGLSYYCTCTRARIQSIGGIYDGHCRVLHHGPDNAAVRIRQQHPVTQFTDLLRGIIHADEKLAREDFIIHRRDGLFAYNLAVVVDDHFQGVTEIVRGADLIEPTVRQIPLYQLFGWKVPDYIHLPLALNPQGAKLSKQNHAPALPKGDPRPVLIAALQFLGQQAEAHWQDFSVEQILQSAVKNWMLTAVPESAIVNSTFSNASC.

L-glutamate contacts are provided by residues 19-23 (RFAPS) and Glu55. Positions 22-32 (PSPSGELHFGS) match the 'HIGH' region motif. Positions 111, 113, 125, and 129 each coordinate Zn(2+). Residues Tyr182 and Arg200 each contribute to the L-glutamate site. Residues 238 to 242 (KLSKQ) carry the 'KMSKS' region motif. Lys241 contacts ATP.

Belongs to the class-I aminoacyl-tRNA synthetase family. GluQ subfamily. Zn(2+) serves as cofactor.

Its function is as follows. Catalyzes the tRNA-independent activation of glutamate in presence of ATP and the subsequent transfer of glutamate onto a tRNA(Asp). Glutamate is transferred on the 2-amino-5-(4,5-dihydroxy-2-cyclopenten-1-yl) moiety of the queuosine in the wobble position of the QUC anticodon. The sequence is that of Glutamyl-Q tRNA(Asp) synthetase from Shigella flexneri.